The following is a 313-amino-acid chain: uncharacterized protein (313 aa).

The next 6 helical transmembrane spans lie at 16 to 36 (AGTWVMIGILGLTMVGFAFLA), 106 to 126 (FTILTGLFTIIIAAGIVANEF), 155 to 175 (FGLLLLLILFIGSTLLGLIFF), 208 to 228 (LSESVSALMVATMAFMLSAVF), 233 to 253 (LAVGFSIFLLVAGTTATAFIA), and 286 to 306 (FSLVMLAIYFIIFLLLAFGIF).

It localises to the cell membrane. This is an uncharacterized protein from Bacillus subtilis (strain 168).